A 167-amino-acid polypeptide reads, in one-letter code: Ureidoglycolate lyase (167 aa).

It belongs to the ureidoglycolate lyase family. In terms of assembly, homodimer. Requires Ni(2+) as cofactor.

The catalysed reaction is (S)-ureidoglycolate = urea + glyoxylate. Its pathway is nitrogen metabolism; (S)-allantoin degradation. In terms of biological role, catalyzes the catabolism of the allantoin degradation intermediate (S)-ureidoglycolate, generating urea and glyoxylate. Involved in the utilization of allantoin as nitrogen source. The protein is Ureidoglycolate lyase of Pseudomonas putida (strain ATCC 700007 / DSM 6899 / JCM 31910 / BCRC 17059 / LMG 24140 / F1).